The sequence spans 7094 residues: Replicase polyprotein 1ab (7094 aa).

The region spanning 54-196 (PENHVMVDCR…PWVMYLRKCG (143 aa)) is the CoV Nsp1 globular domain. The region spanning 216–246 (FKVEDAYDLVHDEPKGKFSKKAYALIRGYRG) is the BetaCoV Nsp1 C-terminal domain. In terms of domain architecture, CoV Nsp2 N-terminal spans 250-519 (LLYVDQYGCD…LICKALYLDY (270 aa)). C392, C397, C413, and C416 together coordinate Zn(2+). Residues 392-416 (CEQDLCDFKGWVPGNMIDGFACTTC) are C4. In terms of domain architecture, CoV Nsp2 middle spans 524 to 713 (CGNLHQRELL…AQAFRSVAKV (190 aa)). Residues 733 to 851 (RRRICLSGSK…LDQAWRVPCA (119 aa)) form the CoV Nsp2 C-terminal domain. The Ubiquitin-like 1 domain occupies 853 to 966 (RRVTFKEQPT…LYCAFTAPED (114 aa)). A Peptidase C16 1 domain is found at 1036-1274 (DLESVIQDYE…IAQLYGSCIT (239 aa)). The active-site For PL1-PRO activity is the C1074. Residues C1151, C1154, C1177, and C1179 each coordinate Zn(2+). A C4-type 1 zinc finger spans residues 1151-1179 (CIKCDLALKLKGLDAMFFYGDVVSHVCKC). Residues H1225 and D1236 each act as for PL1-PRO activity in the active site. The Macro domain maps to 1275–1435 (PNVCFVKGDI…LISKCQITAV (161 aa)). The DPUP domain occupies 1491-1563 (DDARTFVQSN…VAQIKALFLD (73 aa)). One can recognise a Ubiquitin-like 2 domain in the interval 1562–1617 (LDKVDILLTVDGVNFTNRFVPVGESFGKSLGNVFCDGVNVTKHKCDINYKGKVFFQ). The Peptidase C16 2 domain occupies 1631 to 1892 (SSFNFDQKEL…KIEYNPDLSQ (262 aa)). C1671 (for PL2-PRO activity) is an active-site residue. Zn(2+)-binding residues include C1749, C1751, C1783, and C1785. The C4-type 2 zinc finger occupies 1749–1785 (CKCGVKQEQRTGVDAVMHFGTLSREDLEIGYTVDCSC). Catalysis depends on for PL2-PRO activity residues H1828 and D1842. Positions 1906–2007 (IKAQFKTFEK…TYFNRPLLVD (102 aa)) constitute a Nucleic acid-binding domain. The 150-residue stretch at 2020–2169 (DDGGDISESD…ADNKVIYTTE (150 aa)) folds into the G2M domain. 3 helical membrane-spanning segments follow: residues 2138 to 2158 (ISAC…WIKI), 2199 to 2219 (ACII…NVIF), and 2227 to 2247 (IGFL…TFSL). The HD1 stretch occupies residues 2138–2385 (ISACFNFIKW…ASFIKLFILF (248 aa)). Positions 2235–2296 (GKIAQWIKST…AIDVVQYEAD (62 aa)) constitute a 3Ecto domain. 2 disulfide bridges follow: C2251–C2275 and C2266–C2272. 3 consecutive transmembrane segments (helical) span residues 2313-2333 (LIVS…LISI), 2343-2363 (LFML…ANML), and 2365-2385 (AHVF…FILF). The interval 2383–2473 (ILFRHVAYGC…ELKRPIQPTD (91 aa)) is Y1. The CoV Nsp3 Y domain occupies 2383–2750 (ILFRHVAYGC…LTTPFSLKGG (368 aa)). Zn(2+) contacts are provided by H2387, C2392, C2397, C2400, C2433, H2436, C2440, and C2443. Residues 2387-2400 (HVAYGCSKPGCLFC) are ZF1. The segment at 2433 to 2443 (CSKHQWNCIDC) is ZF2. Residues 2474-2566 (VAYHTVTDVK…MVDKNLITTA (93 aa)) are Y2. Residues 2474–2750 (VAYHTVTDVK…LTTPFSLKGG (277 aa)) are coV-Y. A Y3 region spans residues 2567–2649 (NTGTSVTETM…DSVMSAVSAG (83 aa)). Positions 2650–2750 (LELTDESCNN…LTTPFSLKGG (101 aa)) are Y4. 7 consecutive transmembrane segments (helical) span residues 2752 to 2772 (VFSY…IGLW), 2824 to 2844 (STFG…VAVV), 3009 to 3029 (VFDL…FLAL), 3031 to 3051 (ASSI…YYLI), 3063 to 3083 (IVFV…VFQV), 3090 to 3110 (VYAI…SVIM), and 3115 to 3135 (LVMY…SVVV). The HD2 stretch occupies residues 2752–3135 (VFSYFVYVCF…FCLLYISVVV (384 aa)). The Nsp4C domain maps to 3149–3246 (LGTSVRSDGT…TASVSTSFLQ (98 aa)). In terms of domain architecture, Peptidase C30 spans 3247-3549 (SGIVKMVNPT…YQQLAGIKLQ (303 aa)). Catalysis depends on for 3CL-PRO activity residues H3287 and C3391. Transmembrane regions (helical) follow at residues 3558–3578 (GIVC…TAFV), 3588–3608 (TNML…MLLV), 3614–3634 (YLTM…YLVV), 3657–3677 (TYTD…FVTL), 3684–3704 (LFSF…WYMG), 3711–3731 (ILLM…LSMA), and 3755–3775 (IVLV…GLFS). Positions 3558 to 3775 (GIVCWIMAST…IISCYWGLFS (218 aa)) are HD3. The region spanning 3837-3925 (SKLTDVKCAN…DYAKDNTVLQ (89 aa)) is the RdRp Nsp7 cofactor domain. One can recognise a RdRp Nsp8 cofactor domain in the interval 3926–4122 (ALQSEFVNMA…HNEVSATVLQ (197 aa)). One can recognise a Nsp9 ssRNA-binding domain in the interval 4123–4232 (NNELMPAKLK…GTISSTVRLQ (110 aa)). Residues 4233–4370 (AGTATEYASN…CVSTDTTVQS (138 aa)) enclose the ExoN/MTase coactivator domain. The Zn(2+) site is built by C4306, C4309, H4315, C4322, C4348, C4351, C4359, and C4361. 2 zinc fingers span residues 4306 to 4322 (CIYC…DGLC) and 4348 to 4361 (CQVC…SCSC). Residues 4375–4630 (FLNRVRGTSV…DCELYVNNAY (256 aa)) enclose the NiRAN domain. Residues N4578 and D4587 each contribute to the Mn(2+) site. The region spanning 4631 to 4729 (RLFDLVQYDF…MNMDVDTHRY (99 aa)) is the Nsp12 Interface domain. Residues H4660, C4666, C4671, C4675, and C4852 each contribute to the Zn(2+) site. A Nsp12 RNA-dependent RNA polymerase domain is found at 4730–5297 (RLSLKDLLLY…NMYLRSAVMQ (568 aa)). The tract at residues 4732 to 4946 (SLKDLLLYAA…HQKCLKSIAA (215 aa)) is rdRp Fingers N-ter. Residues 4947–4985 (TRGVPVVIGTTKFYGGWDDMLRRLIKDVDNPVLMGWDYP) are rdRp Palm N-ter. In terms of domain architecture, RdRp catalytic spans 4977–5139 (PVLMGWDYPK…CYNSDYASKG (163 aa)). The segment at 4986–5044 (KCDRAMPNILRIVSSLVLARKHEACCSQSDRFYRLANECAQVLSEIVMCGGCYYVKPGG) is rdRp Fingers C-ter. 3 residues coordinate Zn(2+): H5007, C5010, and C5011. A rdRp Palm C-ter region spans residues 5045-5180 (TSSGDATTAF…NNGPHEFCSQ (136 aa)). Active-site residues include S5124, D5125, and D5126. The interval 5181–5297 (HTMLVKMDGD…NMYLRSAVMQ (117 aa)) is rdRp Thumb. The CV ZBD domain occupies 5298–5410 (SVGACVVCSS…DDFNRIASCK (113 aa)). Zn(2+) contacts are provided by C5302, C5305, C5313, C5316, C5323, C5326, H5330, H5336, C5347, C5352, C5369, and H5372. In terms of domain architecture, (+)RNA virus helicase ATP-binding spans 5553–5734 (SVLETFQNNV…MCCLGPDIFL (182 aa)). 5578–5585 (GPPGTGKS) serves as a coordination point for ATP. The 170-residue stretch at 5735 to 5904 (GTCYRCPKEI…VETRVQCSTN (170 aa)) folds into the (+)RNA virus helicase C-terminal domain. In terms of domain architecture, ExoN spans 5971–6186 (LFITKEEAVK…RCLAVYDCFC (216 aa)). Residues D5989, E5991, and E6090 contribute to the active site. Zn(2+) is bound by residues C6106, C6109, C6125, H6128, H6156, C6160, and H6163. Catalysis depends on residues H6167 and D6172. C6178 is a Zn(2+) binding site. Residues 6195–6421 (YPIISNELSI…NLWNTFTKLQ (227 aa)) form the N7-MTase domain. S-adenosyl-L-methionine is bound at residue 6230-6236 (DIGNPKA). Residues 6308–6322 (CNGGSLYVNKHAFHT) are gpppA-binding. The Zn(2+) site is built by C6346, C6367, C6378, and H6381. In terms of domain architecture, Nsp15 N-terminal oligomerization spans 6422–6482 (SLENVVYNLV…NVAVELFAKR (61 aa)). Residues 6483 to 6603 (SIRHHPELKL…FAVRKEGQDV (121 aa)) form the AV-Nsp11N/CoV-Nsp15M domain. The NendoU domain maps to 6653-6792 (TCRTDMEKDF…NDEKVMTFYP (140 aa)). Residues H6683, H6698, K6738, K6841, D6925, K6965, and E6998 contribute to the active site. Positions 6797–7091 (ASDWKPGYSM…KEVFVGDSLV (295 aa)) constitute a Nidovirus-type SAM-dependent 2'-O-MTase domain.

The protein belongs to the coronaviruses polyprotein 1ab family. In terms of assembly, interacts with host PHB and PHB2. As to quaternary structure, interacts with papain-like protease nsp3 and non-structural protein 6. Monomer. Homodimer. Only the homodimer shows catalytic activity. In terms of assembly, interacts with nsp8 and nsp12 to form the replication-transcription complex (RTC): nsp12, nsp7, two subunits of nsp8, and up to two subunits of nsp13. As to quaternary structure, interacts with nsp7, nsp13 and nsp12 to form the replication-transcription complex (RTC): nsp12, nsp7, two subunits of nsp8, and up to two subunits of nsp13. Interacts with nsp12. In terms of assembly, interacts with proofreading exoribonuclease nsp14 and 2'-O-methyltransferase nsp16; these interactions enhance nsp14 and nsp16 enzymatic activities. As to quaternary structure, interacts with nsp7 and nsp8 to form the replication-transcription complex (RTC): nsp12, nsp7, two subunits of nsp8, and up to two subunits of nsp13. Interacts with nsp9. Interacts with nsp8 to form the replication-transcription complex (RTC): nsp12, nsp7, two subunits of nsp8, and up to two subunits of nsp13. Requires Mn(2+) as cofactor. Mg(2+) is required as a cofactor. Post-translationally, specific enzymatic cleavages in vivo by its own proteases yield mature proteins. 3CL-PRO and PL-PRO proteinases are autocatalytically processed.

It is found in the host membrane. The protein localises to the host cytoplasm. Its subcellular location is the host perinuclear region. It localises to the host endoplasmic reticulum-Golgi intermediate compartment. It carries out the reaction RNA(n) + a ribonucleoside 5'-triphosphate = RNA(n+1) + diphosphate. The catalysed reaction is ATP + H2O = ADP + phosphate + H(+). It catalyses the reaction Thiol-dependent hydrolysis of ester, thioester, amide, peptide and isopeptide bonds formed by the C-terminal Gly of ubiquitin (a 76-residue protein attached to proteins as an intracellular targeting signal).. The enzyme catalyses a 5'-end (N(7)-methyl 5'-triphosphoguanosine)-ribonucleoside in mRNA + S-adenosyl-L-methionine = a 5'-end (N(7)-methyl 5'-triphosphoguanosine)-(2'-O-methyl-ribonucleoside) in mRNA + S-adenosyl-L-homocysteine + H(+). It carries out the reaction uridylyl-uridylyl-ribonucleotide-RNA = a 3'-end uridylyl-2',3'-cyclophospho-uridine-RNA + a 5'-end dephospho-ribonucleoside-RNA. The catalysed reaction is a 5'-end diphospho-ribonucleoside in mRNA + GTP + H(+) = a 5'-end (5'-triphosphoguanosine)-ribonucleoside in mRNA + diphosphate. It catalyses the reaction a 5'-end (5'-triphosphoguanosine)-ribonucleoside in mRNA + S-adenosyl-L-methionine = a 5'-end (N(7)-methyl 5'-triphosphoguanosine)-ribonucleoside in mRNA + S-adenosyl-L-homocysteine. The replicase polyprotein of coronaviruses is a multifunctional protein: it contains the activities necessary for the transcription of negative stranded RNA, leader RNA, subgenomic mRNAs and progeny virion RNA as well as proteinases responsible for the cleavage of the polyprotein into functional products. In terms of biological role, inhibits host translation by interacting with the 40S ribosomal subunit. The nsp1-40S ribosome complex further induces an endonucleolytic cleavage near the 5'UTR of host mRNAs, targeting them for degradation. Viral mRNAs are not susceptible to nsp1-mediated endonucleolytic RNA cleavage thanks to the presence of a 5'-end leader sequence and are therefore protected from degradation. By suppressing host gene expression, nsp1 facilitates efficient viral gene expression in infected cells and evasion from host immune response. Its function is as follows. May play a role in the modulation of host cell survival signaling pathway by interacting with host PHB and PHB2. Indeed, these two proteins play a role in maintaining the functional integrity of the mitochondria and protecting cells from various stresses. Functionally, responsible for the cleavages located at the N-terminus of the replicase polyprotein. In addition, PL-PRO possesses a deubiquitinating/deISGylating activity and processes both 'Lys-48'- and 'Lys-63'-linked polyubiquitin chains from cellular substrates. Participates together with nsp4 in the assembly of virally-induced cytoplasmic double-membrane vesicles necessary for viral replication. Antagonizes innate immune induction of type I interferon by blocking the phosphorylation, dimerization and subsequent nuclear translocation of host IRF3. Also prevents host NF-kappa-B signaling. Participates in the assembly of virally-induced cytoplasmic double-membrane vesicles necessary for viral replication. In terms of biological role, cleaves the C-terminus of replicase polyprotein at 11 sites. Recognizes substrates containing the core sequence [ILMVF]-Q-|-[SGACN]. Also able to bind an ADP-ribose-1''-phosphate (ADRP). Its function is as follows. Plays a role in the initial induction of autophagosomes from host endoplasmic reticulum. Later, limits the expansion of these phagosomes that are no longer able to deliver viral components to lysosomes. Functionally, forms a hexadecamer with nsp8 (8 subunits of each) that may participate in viral replication by acting as a primase. Alternatively, may synthesize substantially longer products than oligonucleotide primers. Forms a hexadecamer with nsp7 (8 subunits of each) that may participate in viral replication by acting as a primase. Alternatively, may synthesize substantially longer products than oligonucleotide primers. In terms of biological role, forms a primer, NSP9-pU, which is utilized by the polymerase for the initiation of RNA chains. Interacts with ribosome signal recognition particle RNA (SRP). Together with NSP8, suppress protein integration into the cell membrane, thereby disrupting host immune defenses. Its function is as follows. Plays a pivotal role in viral transcription by stimulating both nsp14 3'-5' exoribonuclease and nsp16 2'-O-methyltransferase activities. Therefore plays an essential role in viral mRNAs cap methylation. Functionally, RNA-directed RNA polymerase that catalyzes the transcription of viral genomic and subgenomic RNAs. Acts in complex with nsp7 and nsp8 to transcribe both the minus and positive strands of genomic RNA. The kinase-like NiRAN domain of NSP12 attaches one or more nucleotides to the amino terminus of NSP9, forming a covalent RNA-protein intermediate that serves as transcription/replication primer. Subgenomic RNAs (sgRNAs) are formed by discontinuous transcription: The polymerase has the ability to pause at transcription-regulating sequences (TRS) and jump to the leader TRS, resulting in a major deletion. This creates a series of subgenomic RNAs that are replicated, transcribed and translated. In addition, Nsp12 is a subunit of the viral RNA capping enzyme that catalyzes the RNA guanylyltransferase reaction for genomic and sub-genomic RNAs. Subsequently, the NiRAN domain transfers RNA to GDP, and forms the core cap structure GpppA-RNA. Multi-functional protein with a zinc-binding domain in N-terminus displaying RNA and DNA duplex-unwinding activities with 5' to 3' polarity. Activity of helicase is dependent on magnesium. In terms of biological role, plays a role in viral RNA synthesis through two distinct activities. The N7-guanine methyltransferase activity plays a role in the formation of the cap structure GpppA-RNA. The proofreading exoribonuclease reduces the sensitivity of the virus to RNA mutagens during replication. This activity acts on both ssRNA and dsRNA in a 3'-5' direction. Its function is as follows. Plays a role in viral transcription/replication and prevents the simultaneous activation of host cell dsRNA sensors, such as MDA5/IFIH1, OAS, and PKR. Acts by degrading the 5'-polyuridines generated during replication of the poly(A) region of viral genomic and subgenomic RNAs. Catalyzes a two-step reaction in which a 2'3'-cyclic phosphate (2'3'-cP) is first generated by 2'-O transesterification, which is then hydrolyzed to a 3'-phosphate (3'-P). If not degraded, poly(U) RNA would hybridize with poly(A) RNA tails and activate host dsRNA sensors. Functionally, methyltransferase that mediates mRNA cap 2'-O-ribose methylation to the 5'-cap structure of viral mRNAs. N7-methyl guanosine cap is a prerequisite for binding of nsp16. Therefore plays an essential role in viral mRNAs cap methylation which is essential to evade immune system. The chain is Replicase polyprotein 1ab (rep) from Bos taurus (Bovine).